Here is a 308-residue protein sequence, read N- to C-terminus: Very-long-chain enoyl-CoA reductase (308 aa).

Topologically, residues 1–86 (MKHYEVEILD…YFRDLGAQIS (86 aa)) are cytoplasmic. Lysine 22 is subject to N6-acetyllysine. Residue serine 58 is modified to Phosphoserine. The residue at position 60 (lysine 60) is an N6-acetyllysine. The helical transmembrane segment at 87–106 (WVTVFLTEYAGPLFIYLLFY) threads the bilayer. Over 107–124 (FRVPFIYGRKYDFTSSRH) the chain is Lumenal. The chain crosses the membrane as a helical span at residues 125–147 (TVVHLACICHSFHYIKRLLETLF). Over 148 to 158 (VHRFSHGTMPL) the chain is Cytoplasmic. A helical transmembrane segment spans residues 159–180 (RNIFKNCTYYWGFAAWMAYYIN). The Lumenal segment spans residues 181–189 (HPLYTPPTY). Residues 190 to 216 (GAQQVKLALAIFVICQLGNFSIHMALR) traverse the membrane as a helical segment. The Cytoplasmic portion of the chain corresponds to 217 to 245 (DLRPAGSKTRKIPYPTRNPFTWLFLLVSC). The helical transmembrane segment at 246 to 262 (PNYTYEVGSWIGFAIMT) threads the bilayer. The Lumenal portion of the chain corresponds to 263–264 (QC). A helical membrane pass occupies residues 265–292 (LPVALFSLVGFTQMTIWAKGKHRSYLKE). Residues 293–308 (FRDYPPLRMPIIPFLL) are Cytoplasmic-facing.

It belongs to the steroid 5-alpha reductase family. As to quaternary structure, interacts with ELOVL1 and LASS2. In terms of processing, glycosylated.

Its subcellular location is the endoplasmic reticulum membrane. It catalyses the reaction a very-long-chain 2,3-saturated fatty acyl-CoA + NADP(+) = a very-long-chain (2E)-enoyl-CoA + NADPH + H(+). The catalysed reaction is octadecanoyl-CoA + NADP(+) = (2E)-octadecenoyl-CoA + NADPH + H(+). It carries out the reaction (2E,7Z,10Z,13Z,16Z)-docosapentaenoyl-CoA + NADPH + H(+) = (7Z,10Z,13Z,16Z)-docosatetraenoyl-CoA + NADP(+). The enzyme catalyses (2E,7Z,10Z,13Z,16Z,19Z)-docosahexaenoyl-CoA + NADPH + H(+) = (7Z,10Z,13Z,16Z,19Z)-docosapentaenoyl-CoA + NADP(+). It catalyses the reaction (2E,8Z,11Z,14Z)-eicosatetraenoyl-CoA + NADPH + H(+) = (8Z,11Z,14Z)-eicosatrienoyl-CoA + NADP(+). The catalysed reaction is (2E)-hexadecenoyl-CoA + NADPH + H(+) = hexadecanoyl-CoA + NADP(+). It participates in lipid metabolism; fatty acid biosynthesis. The protein operates within lipid metabolism; sphingolipid metabolism. Involved in both the production of very long-chain fatty acids for sphingolipid synthesis and the degradation of the sphingosine moiety in sphingolipids through the sphingosine 1-phosphate metabolic pathway. Catalyzes the last of the four reactions of the long-chain fatty acids elongation cycle. This endoplasmic reticulum-bound enzymatic process, allows the addition of 2 carbons to the chain of long- and very long-chain fatty acids/VLCFAs per cycle. This enzyme reduces the trans-2,3-enoyl-CoA fatty acid intermediate to an acyl-CoA that can be further elongated by entering a new cycle of elongation. Thereby, it participates in the production of VLCFAs of different chain lengths that are involved in multiple biological processes as precursors of membrane lipids and lipid mediators. Catalyzes the saturation step of the sphingosine 1-phosphate metabolic pathway, the conversion of trans-2-hexadecenoyl-CoA to palmitoyl-CoA. The protein is Very-long-chain enoyl-CoA reductase (TECR) of Bos taurus (Bovine).